We begin with the raw amino-acid sequence, 166 residues long: Interferon gamma (166 aa).

Positions 1-23 are cleaved as a signal peptide; it reads MKYTSYILALQLCVLLGFSGSYG. Q24 bears the Pyrrolidone carboxylic acid mark. N-linked (GlcNAc...) asparagine glycans are attached at residues N39 and N106.

It belongs to the type II (or gamma) interferon family. In terms of assembly, homodimer. Interacts with IFNGR1 (via extracellular domain); this interaction promotes IFNGR1 dimerization. As to expression, released primarily from activated T lymphocytes.

The protein localises to the secreted. Its function is as follows. Type II interferon produced by immune cells such as T-cells and NK cells that plays crucial roles in antimicrobial, antiviral, and antitumor responses by activating effector immune cells and enhancing antigen presentation. Primarily signals through the JAK-STAT pathway after interaction with its receptor IFNGR1 to affect gene regulation. Upon IFNG binding, IFNGR1 intracellular domain opens out to allow association of downstream signaling components JAK2, JAK1 and STAT1, leading to STAT1 activation, nuclear translocation and transcription of IFNG-regulated genes. Many of the induced genes are transcription factors such as IRF1 that are able to further drive regulation of a next wave of transcription. Plays a role in class I antigen presentation pathway by inducing a replacement of catalytic proteasome subunits with immunoproteasome subunits. In turn, increases the quantity, quality, and repertoire of peptides for class I MHC loading. Increases the efficiency of peptide generation also by inducing the expression of activator PA28 that associates with the proteasome and alters its proteolytic cleavage preference. Up-regulates as well MHC II complexes on the cell surface by promoting expression of several key molecules such as cathepsins B/CTSB, H/CTSH, and L/CTSL. Participates in the regulation of hematopoietic stem cells during development and under homeostatic conditions by affecting their development, quiescence, and differentiation. This Cervus elaphus (Red deer) protein is Interferon gamma (IFNG).